Here is a 546-residue protein sequence, read N- to C-terminus: CTP synthase (546 aa).

Residues 1–266 (MTTNYIFVTG…DDLVCARFGI (266 aa)) are amidoligase domain. Ser-14 lines the CTP pocket. Ser-14 provides a ligand contact to UTP. Residues 15–20 (SLGKGI) and Asp-72 contribute to the ATP site. 2 residues coordinate Mg(2+): Asp-72 and Glu-140. Residues 147–149 (DIE), 187–192 (KTKPTQ), and Lys-223 contribute to the CTP site. Residues 187 to 192 (KTKPTQ) and Lys-223 contribute to the UTP site. ATP is bound at residue 239-241 (KDV). The Glutamine amidotransferase type-1 domain occupies 291–542 (TIGMVGKYIE…VKAAGQNARG (252 aa)). L-glutamine is bound at residue Gly-352. The Nucleophile; for glutamine hydrolysis role is filled by Cys-379. L-glutamine contacts are provided by residues 380-383 (LGMQ), Glu-403, and Arg-470. Residues His-515 and Glu-517 contribute to the active site.

This sequence belongs to the CTP synthase family. In terms of assembly, homotetramer.

The enzyme catalyses UTP + L-glutamine + ATP + H2O = CTP + L-glutamate + ADP + phosphate + 2 H(+). The catalysed reaction is L-glutamine + H2O = L-glutamate + NH4(+). It catalyses the reaction UTP + NH4(+) + ATP = CTP + ADP + phosphate + 2 H(+). It functions in the pathway pyrimidine metabolism; CTP biosynthesis via de novo pathway; CTP from UDP: step 2/2. Its activity is regulated as follows. Allosterically activated by GTP, when glutamine is the substrate; GTP has no effect on the reaction when ammonia is the substrate. The allosteric effector GTP functions by stabilizing the protein conformation that binds the tetrahedral intermediate(s) formed during glutamine hydrolysis. Inhibited by the product CTP, via allosteric rather than competitive inhibition. In terms of biological role, catalyzes the ATP-dependent amination of UTP to CTP with either L-glutamine or ammonia as the source of nitrogen. Regulates intracellular CTP levels through interactions with the four ribonucleotide triphosphates. The sequence is that of CTP synthase from Vibrio campbellii (strain ATCC BAA-1116).